A 213-amino-acid chain; its full sequence is Octanoyltransferase (213 aa).

The BPL/LPL catalytic domain maps to 32 to 207; it reads ENSHDEIWLV…NILALLNNPP (176 aa). Residues 71 to 78, 138 to 140, and 151 to 153 each bind substrate; these read RGGQVTYH, SLG, and GLA. Residue cysteine 169 is the Acyl-thioester intermediate of the active site.

The protein belongs to the LipB family.

The protein resides in the cytoplasm. It catalyses the reaction octanoyl-[ACP] + L-lysyl-[protein] = N(6)-octanoyl-L-lysyl-[protein] + holo-[ACP] + H(+). The protein operates within protein modification; protein lipoylation via endogenous pathway; protein N(6)-(lipoyl)lysine from octanoyl-[acyl-carrier-protein]: step 1/2. In terms of biological role, catalyzes the transfer of endogenously produced octanoic acid from octanoyl-acyl-carrier-protein onto the lipoyl domains of lipoate-dependent enzymes. Lipoyl-ACP can also act as a substrate although octanoyl-ACP is likely to be the physiological substrate. This chain is Octanoyltransferase, found in Salmonella paratyphi A (strain ATCC 9150 / SARB42).